The sequence spans 206 residues: Probable GTP-binding protein EngB (206 aa).

The 175-residue stretch at 24–198 (QGREVAFAGR…HARLDEWLGL (175 aa)) folds into the EngB-type G domain. Residues 32–39 (GRSNVGKS), 59–63 (GRTQL), 77–80 (DLPG), 144–147 (TKAD), and 177–179 (FSA) contribute to the GTP site. The Mg(2+) site is built by Ser-39 and Thr-61.

The protein belongs to the TRAFAC class TrmE-Era-EngA-EngB-Septin-like GTPase superfamily. EngB GTPase family. It depends on Mg(2+) as a cofactor.

In terms of biological role, necessary for normal cell division and for the maintenance of normal septation. The chain is Probable GTP-binding protein EngB from Alkalilimnicola ehrlichii (strain ATCC BAA-1101 / DSM 17681 / MLHE-1).